The chain runs to 441 residues: 5-hydroxytryptamine receptor 3B (441 aa).

A signal peptide spans M1–A21. Over T22 to H238 the chain is Extracellular. N52, N96, N138, N168, and N203 each carry an N-linked (GlcNAc...) asparagine glycan. Cysteines 155 and 169 form a disulfide. Residues P239 to G259 traverse the membrane as a helical segment. Over S260 to R268 the chain is Cytoplasmic. The chain crosses the membrane as a helical span at residues A269–V286. N-linked (GlcNAc...) asparagine glycosylation is present at N287. Residues N287 to G303 are Extracellular-facing. A helical membrane pass occupies residues H304 to V324. The Cytoplasmic portion of the chain corresponds to K325–R414. Residues V381–D413 are HA-stretch; determines single-channel conductance in 5-HT3 receptors. A helical membrane pass occupies residues L415–W435. Over A436–V441 the chain is Extracellular.

This sequence belongs to the ligand-gated ion channel (TC 1.A.9) family. 5-hydroxytryptamine receptor (TC 1.A.9.2) subfamily. HTR3B sub-subfamily. Forms homopentameric as well as heteropentameric serotonin-activated cation-selective channel complexes with HTR3A. The homomeric complex is not functional. Heteropentameric complexes display properties which resemble that of neuronal serotonin-activated channels in vivo. N-glycosylation required for membrane localization. As to expression, expressed in the brain cortex, in the caudate nucleus, the hippocampus, the thalamus and the amygdala. Detected in the kidney and testis as well as in monocytes of the spleen, small and large intestine, uterus, prostate, ovary and placenta.

It localises to the postsynaptic cell membrane. The protein localises to the cell membrane. It catalyses the reaction Na(+)(in) = Na(+)(out). It carries out the reaction K(+)(in) = K(+)(out). The enzyme catalyses Ca(2+)(in) = Ca(2+)(out). In terms of biological role, forms serotonin (5-hydroxytryptamine/5-HT3)-activated cation-selective channel complexes, which when activated cause fast, depolarizing responses in neurons. This chain is 5-hydroxytryptamine receptor 3B, found in Homo sapiens (Human).